The chain runs to 92 residues: Small ribosomal subunit protein uS19 (92 aa).

This sequence belongs to the universal ribosomal protein uS19 family.

Protein S19 forms a complex with S13 that binds strongly to the 16S ribosomal RNA. The chain is Small ribosomal subunit protein uS19 from Bifidobacterium longum subsp. infantis (strain ATCC 15697 / DSM 20088 / JCM 1222 / NCTC 11817 / S12).